The primary structure comprises 164 residues: Class I hydrophobin rodA (164 aa).

The N-terminal stretch at 1–18 is a signal peptide; it reads MQFSISALVLGLAATVYA. N-linked (GlcNAc...) asparagine glycosylation occurs at Asn50. 4 cysteine pairs are disulfide-bonded: Cys60–Cys138, Cys68–Cys132, Cys69–Cys109, and Cys139–Cys157.

It belongs to the fungal hydrophobin family. Self-assembles to form functional amyloid fibrils called rodlets. Self-assembly into fibrillar rodlets occurs spontaneously at hydrophobic:hydrophilic interfaces and the rodlets further associate laterally to form amphipathic monolayers.

It localises to the secreted. The protein localises to the cell wall. Functionally, aerial growth, conidiation, and dispersal of filamentous fungi in the environment rely upon a capability of their secreting small amphipathic proteins called hydrophobins (HPBs) with low sequence identity. Class I can self-assemble into an outermost layer of rodlet bundles on aerial cell surfaces, conferring cellular hydrophobicity that supports fungal growth, development and dispersal; whereas Class II form highly ordered films at water-air interfaces through intermolecular interactions but contribute nothing to the rodlet structure. RodA is a class I hydrophobin involved in the cell surface hydrophobicity. The surface rodlet layer of the conidial cell wall makes airborne conidia of filamentous fungi inert to both innate and adaptive immunity. This is Class I hydrophobin rodA from Penicillium camemberti (strain FM 013).